The chain runs to 341 residues: uncharacterized protein (341 aa).

Belongs to the Gfo/Idh/MocA family.

This is an uncharacterized protein from Bacillus subtilis (strain 168).